Reading from the N-terminus, the 626-residue chain is ATP-dependent RNA helicase dbp-8 (626 aa).

Residues 1-25 (MPSATAAKAKKANANANLKSKVNKA) are compositionally biased toward low complexity. Positions 1 to 183 (MPSATAAKAK…ATPALPVPEP (183 aa)) are disordered. Over residues 40–98 (DESDFGSELDVEDESAASDEEDEDEDEDEHDLEEGVSDEGEGVSDEEEGVSDEDEDEEN) the composition is skewed to acidic residues. Positions 161-173 (KQAEAPKTEKTEE) are enriched in basic and acidic residues. The Q motif signature appears at 195 to 223 (TTFDALNVRPWLVQSLANMAIKRPTGIQK). Residues 226–406 (IPEILKGRDC…ERPPIPGRAP (181 aa)) form the Helicase ATP-binding domain. 239–246 (SRTGSGKT) contacts ATP. Residues 348 to 351 (DEAD) carry the DEAD box motif. The region spanning 438 to 589 (YLHMFLLTPQ…GVNLETRVIR (152 aa)) is the Helicase C-terminal domain.

It belongs to the DEAD box helicase family. DDX49/DBP8 subfamily.

The protein localises to the nucleus. The protein resides in the nucleolus. It catalyses the reaction ATP + H2O = ADP + phosphate + H(+). Functionally, ATP-binding RNA helicase involved in 40S ribosomal subunit biogenesis and is required for the normal formation of 18S rRNAs through pre-rRNA processing at A0, A1 and A2 sites. Required for vegetative growth. The sequence is that of ATP-dependent RNA helicase dbp-8 (dbp-8) from Neurospora crassa (strain ATCC 24698 / 74-OR23-1A / CBS 708.71 / DSM 1257 / FGSC 987).